A 284-amino-acid polypeptide reads, in one-letter code: Pantothenate synthetase (284 aa).

30–37 (MGNLHDGH) is an ATP binding site. The active-site Proton donor is the His-37. Gln-61 contacts (R)-pantoate. Position 61 (Gln-61) interacts with beta-alanine. Residue 149 to 152 (GEKD) participates in ATP binding. Residue Gln-155 participates in (R)-pantoate binding. Residues Ile-178 and 186–189 (LSSR) contribute to the ATP site.

The protein belongs to the pantothenate synthetase family. Homodimer.

It localises to the cytoplasm. The catalysed reaction is (R)-pantoate + beta-alanine + ATP = (R)-pantothenate + AMP + diphosphate + H(+). It functions in the pathway cofactor biosynthesis; (R)-pantothenate biosynthesis; (R)-pantothenate from (R)-pantoate and beta-alanine: step 1/1. Functionally, catalyzes the condensation of pantoate with beta-alanine in an ATP-dependent reaction via a pantoyl-adenylate intermediate. In Salmonella heidelberg (strain SL476), this protein is Pantothenate synthetase.